Consider the following 187-residue polypeptide: ATP synthase subunit b 2 (187 aa).

Positions 1 to 12 (MAQERAEHESAD) are enriched in basic and acidic residues. Residues 1-31 (MAQERAEHESADQHTTSTGVPHEGQGEPFPP) are disordered. Residues 40–60 (LLIWLAISFLLLYALMSKLVL) form a helical membrane-spanning segment.

It belongs to the ATPase B chain family. F-type ATPases have 2 components, F(1) - the catalytic core - and F(0) - the membrane proton channel. F(1) has five subunits: alpha(3), beta(3), gamma(1), delta(1), epsilon(1). F(0) has three main subunits: a(1), b(2) and c(10-14). The alpha and beta chains form an alternating ring which encloses part of the gamma chain. F(1) is attached to F(0) by a central stalk formed by the gamma and epsilon chains, while a peripheral stalk is formed by the delta and b chains.

Its subcellular location is the cell inner membrane. F(1)F(0) ATP synthase produces ATP from ADP in the presence of a proton or sodium gradient. F-type ATPases consist of two structural domains, F(1) containing the extramembraneous catalytic core and F(0) containing the membrane proton channel, linked together by a central stalk and a peripheral stalk. During catalysis, ATP synthesis in the catalytic domain of F(1) is coupled via a rotary mechanism of the central stalk subunits to proton translocation. In terms of biological role, component of the F(0) channel, it forms part of the peripheral stalk, linking F(1) to F(0). The b'-subunit is a diverged and duplicated form of b found in plants and photosynthetic bacteria. The sequence is that of ATP synthase subunit b 2 (atpF2) from Beijerinckia indica subsp. indica (strain ATCC 9039 / DSM 1715 / NCIMB 8712).